A 481-amino-acid polypeptide reads, in one-letter code: MIQVLLVTICLAVFPYQGSSIILESGNVDDYEVVYPRKVTALPKGAVQPKYEDAMQYEFKVNGEAVVLHLEKNKGLFSEDYSETHYSPDGREITTYPSVEDHCYYHGRIHNDADSTASISACDGLKGYFKLQGETYLIEPLELSDSEAHAVFKYENVEKEDEAPKMCGVTQNWESDESIKKASQLYLTPEQQRFPQRYIKLAIVVDHGMYTKYSSNFKKIRKRVHQMVSNINEMCRPLNIAITLALLDVWSEKDFITVQADAPTTAGLFGDWRERVLLKKKNHDHAQLLTDTNFARNTIGWAYLGRMCDEKYSVGVVQDHSSKVFMVAVTMTHELGHNLGMEHDDKDKCKCEACIMSAVISDKQSKLFSDCSKDYYQTFLTNDNPQCILNAPLRTDTVSTPVSGNEFLEAGEECDCGSPENPCCDAATCKLRPGAQCADGLCCDQCRFKKKRTICRRARGDNPDDRCTGQSADCPRNGLYS.

Residues 1–20 (MIQVLLVTICLAVFPYQGSS) form the signal peptide. The propeptide occupies 21–190 (IILESGNVDD…KASQLYLTPE (170 aa)). The region spanning 197–392 (RYIKLAIVVD…DNPQCILNAP (196 aa)) is the Peptidase M12B domain. Intrachain disulfides connect C308-C387, C349-C371, and C351-C354. H333 is a Zn(2+) binding site. The active site involves E334. H337 and H343 together coordinate Zn(2+). Residues 393-408 (LRTDTVSTPVSGNEFL) constitute a propeptide that is removed on maturation. The Disintegrin domain occupies 400–481 (TPVSGNEFLE…ADCPRNGLYS (82 aa)). Disulfide bonds link C414–C429, C416–C424, C423–C446, C437–C443, C442–C467, and C455–C474. The Cell attachment site motif lies at 459-461 (RGD).

The protein belongs to the venom metalloproteinase (M12B) family. P-II subfamily. P-IIa sub-subfamily. Monomer. Zn(2+) is required as a cofactor. Expressed by the venom gland.

The protein localises to the secreted. Functionally, impairs hemostasis in the envenomed animal. Inhibits platelet aggregation induced by ADP, thrombin, platelet-activating factor and collagen. Acts by inhibiting fibrinogen interaction with platelet receptors GPIIb/GPIIIa (ITGA2B/ITGB3). This chain is Zinc metalloproteinase/disintegrin, found in Protobothrops elegans (Elegant pitviper).